Here is a 154-residue protein sequence, read N- to C-terminus: UPF0178 protein Glov_0658 (154 aa).

It belongs to the UPF0178 family.

The polypeptide is UPF0178 protein Glov_0658 (Trichlorobacter lovleyi (strain ATCC BAA-1151 / DSM 17278 / SZ) (Geobacter lovleyi)).